We begin with the raw amino-acid sequence, 181 residues long: Oligoribonuclease (181 aa).

The region spanning 8-171 (LIWLDLEMTG…DDIKESIAEL (164 aa)) is the Exonuclease domain. Tyr-129 is an active-site residue.

This sequence belongs to the oligoribonuclease family.

The protein localises to the cytoplasm. Its function is as follows. 3'-to-5' exoribonuclease specific for small oligoribonucleotides. In Colwellia psychrerythraea (strain 34H / ATCC BAA-681) (Vibrio psychroerythus), this protein is Oligoribonuclease.